The primary structure comprises 645 residues: Phosphomethylpyrimidine synthase (645 aa).

Over residues 1–12 the composition is skewed to polar residues; the sequence is MSHNTVIPTTDI. Positions 1–25 are disordered; it reads MSHNTVIPTTDISPKPDPARPRKAQ. Substrate is bound by residues asparagine 253, methionine 282, tyrosine 311, histidine 347, 367–369, 408–411, and glutamate 447; these read SRG and DGLR. Histidine 451 serves as a coordination point for Zn(2+). Tyrosine 474 lines the substrate pocket. Position 515 (histidine 515) interacts with Zn(2+). [4Fe-4S] cluster contacts are provided by cysteine 595, cysteine 598, and cysteine 603.

Belongs to the ThiC family. In terms of assembly, homodimer. [4Fe-4S] cluster is required as a cofactor.

The enzyme catalyses 5-amino-1-(5-phospho-beta-D-ribosyl)imidazole + S-adenosyl-L-methionine = 4-amino-2-methyl-5-(phosphooxymethyl)pyrimidine + CO + 5'-deoxyadenosine + formate + L-methionine + 3 H(+). It functions in the pathway cofactor biosynthesis; thiamine diphosphate biosynthesis. Catalyzes the synthesis of the hydroxymethylpyrimidine phosphate (HMP-P) moiety of thiamine from aminoimidazole ribotide (AIR) in a radical S-adenosyl-L-methionine (SAM)-dependent reaction. In Photorhabdus laumondii subsp. laumondii (strain DSM 15139 / CIP 105565 / TT01) (Photorhabdus luminescens subsp. laumondii), this protein is Phosphomethylpyrimidine synthase.